Consider the following 446-residue polypeptide: Exodeoxyribonuclease 7 large subunit (446 aa).

This sequence belongs to the XseA family. As to quaternary structure, heterooligomer composed of large and small subunits.

It localises to the cytoplasm. It catalyses the reaction Exonucleolytic cleavage in either 5'- to 3'- or 3'- to 5'-direction to yield nucleoside 5'-phosphates.. In terms of biological role, bidirectionally degrades single-stranded DNA into large acid-insoluble oligonucleotides, which are then degraded further into small acid-soluble oligonucleotides. This is Exodeoxyribonuclease 7 large subunit from Streptococcus pneumoniae (strain Taiwan19F-14).